Reading from the N-terminus, the 271-residue chain is Tetraspanin-11 (271 aa).

Residues 1 to 7 (MFRVSNF) are Cytoplasmic-facing. A helical membrane pass occupies residues 8–28 (MVGLANTLVMLVGASAIGYSI). Topologically, residues 29-44 (YMFVHQGVTDCESAIR) are extracellular. The chain crosses the membrane as a helical span at residues 45-65 (IPLLTTGLILFLVSLLGVIGS). At 66–76 (CFKENLAMVSY) the chain is on the cytoplasmic side. A helical membrane pass occupies residues 77–97 (LIILFGGIVALMIFSIFLFFV). Over 98–236 (TNKGAGRVVS…LANIREKWRN (139 aa)) the chain is Extracellular. Asn185 and Asn195 each carry an N-linked (GlcNAc...) asparagine glycan. The chain crosses the membrane as a helical span at residues 237-257 (LLVFNICLLILLITVYSCGCC). Residues 258-271 (ARRNNRTARKSDSV) are Cytoplasmic-facing.

The protein belongs to the tetraspanin (TM4SF) family.

The protein localises to the membrane. May be involved in the regulation of cell differentiation. In Arabidopsis thaliana (Mouse-ear cress), this protein is Tetraspanin-11 (TET11).